The sequence spans 147 residues: Large ribosomal subunit protein uL16 (147 aa).

The protein belongs to the universal ribosomal protein uL16 family. In terms of assembly, part of the 50S ribosomal subunit.

Binds 23S rRNA and is also seen to make contacts with the A and possibly P site tRNAs. The protein is Large ribosomal subunit protein uL16 of Caldicellulosiruptor saccharolyticus (strain ATCC 43494 / DSM 8903 / Tp8T 6331).